Here is a 188-residue protein sequence, read N- to C-terminus: Probable manganese efflux pump MntP (188 aa).

A run of 6 helical transmembrane segments spans residues 3-23, 41-61, 66-86, 106-128, 143-163, and 168-188; these read FTAT…ASIG, LIFG…GILA, LEWN…RMII, WLLV…GLAF, ATLI…PMLG, and ILGG…HFHG.

This sequence belongs to the MntP (TC 9.B.29) family.

The protein resides in the cell inner membrane. In terms of biological role, probably functions as a manganese efflux pump. The protein is Probable manganese efflux pump MntP of Salmonella typhimurium (strain LT2 / SGSC1412 / ATCC 700720).